The following is a 171-amino-acid chain: Putative antiporter subunit mnhG2 (171 aa).

3 helical membrane-spanning segments follow: residues 11-31 (IAALLIFLGSIIAVISAIGIV), 51-71 (VLLTLVGVLIYFTNEQSFFSV), and 72-92 (RLLLSIVFINLTSPVGMHLVA). Positions 144–156 (DVQKQRQKEKQQE) are enriched in basic and acidic residues. The disordered stretch occupies residues 144-171 (DVQKQRQKEKQQEENIESLSEARRETKD).

The protein belongs to the CPA3 antiporters (TC 2.A.63) subunit G family. In terms of assembly, may form a heterooligomeric complex that consists of seven subunits: mnhA2, mnhB2, mnhC2, mnhD2, mnhE2, mnhF2 and mnhG2.

The protein localises to the cell membrane. The chain is Putative antiporter subunit mnhG2 (mnhG2) from Staphylococcus haemolyticus (strain JCSC1435).